A 239-amino-acid polypeptide reads, in one-letter code: 2-C-methyl-D-erythritol 4-phosphate cytidylyltransferase (239 aa).

It belongs to the IspD/TarI cytidylyltransferase family. IspD subfamily.

The enzyme catalyses 2-C-methyl-D-erythritol 4-phosphate + CTP + H(+) = 4-CDP-2-C-methyl-D-erythritol + diphosphate. It participates in isoprenoid biosynthesis; isopentenyl diphosphate biosynthesis via DXP pathway; isopentenyl diphosphate from 1-deoxy-D-xylulose 5-phosphate: step 2/6. Catalyzes the formation of 4-diphosphocytidyl-2-C-methyl-D-erythritol from CTP and 2-C-methyl-D-erythritol 4-phosphate (MEP). The sequence is that of 2-C-methyl-D-erythritol 4-phosphate cytidylyltransferase from Acidobacterium capsulatum (strain ATCC 51196 / DSM 11244 / BCRC 80197 / JCM 7670 / NBRC 15755 / NCIMB 13165 / 161).